We begin with the raw amino-acid sequence, 171 residues long: MKRTKKYPFLTLQRQRFHLNFENASSAAGIPAERDFYRWAWSALKSGYRRADISLILLDEEEARAYNRDYRGKDYATNVLSFALNEGEILPCQVSEKLYGDLIICPQVVLKEAAEQGKTPERHFAHLTIHGVLHLMGYDHIEDDEAEIMEAEEIRLMLAAGFPNPYQEDGH.

The Zn(2+) site is built by histidine 130, histidine 134, and histidine 140.

Belongs to the endoribonuclease YbeY family. Requires Zn(2+) as cofactor.

Its subcellular location is the cytoplasm. Single strand-specific metallo-endoribonuclease involved in late-stage 70S ribosome quality control and in maturation of the 3' terminus of the 16S rRNA. The sequence is that of Endoribonuclease YbeY from Neisseria meningitidis serogroup A / serotype 4A (strain DSM 15465 / Z2491).